The sequence spans 339 residues: Bifunctional protein GlmU (339 aa).

A pyrophosphorylase region spans residues 1–234; it reads MKKENPLAIV…PKDVLGVNSR (234 aa). UDP-N-acetyl-alpha-D-glucosamine contacts are provided by residues 12–15, Lys26, Gln77, and 82–83; these read LAAG and GT. Asp107 lines the Mg(2+) pocket. Residues Gly144, Glu159, Asn174, and Asn232 each coordinate UDP-N-acetyl-alpha-D-glucosamine. Asn232 contributes to the Mg(2+) binding site. Residues 235–255 form a linker region; it reads IELAMADEELRMRRNREVMLT. The segment at 256–339 is N-acetyltransferase; it reads GVSMILPATI…KIPAQQREEE (84 aa).

It belongs to the N-acetylglucosamine-1-phosphate uridyltransferase family. As to quaternary structure, homotrimer. Requires Mg(2+) as cofactor.

The protein resides in the cytoplasm. It catalyses the reaction alpha-D-glucosamine 1-phosphate + acetyl-CoA = N-acetyl-alpha-D-glucosamine 1-phosphate + CoA + H(+). The catalysed reaction is N-acetyl-alpha-D-glucosamine 1-phosphate + UTP + H(+) = UDP-N-acetyl-alpha-D-glucosamine + diphosphate. The protein operates within nucleotide-sugar biosynthesis; UDP-N-acetyl-alpha-D-glucosamine biosynthesis; N-acetyl-alpha-D-glucosamine 1-phosphate from alpha-D-glucosamine 6-phosphate (route II): step 2/2. It participates in nucleotide-sugar biosynthesis; UDP-N-acetyl-alpha-D-glucosamine biosynthesis; UDP-N-acetyl-alpha-D-glucosamine from N-acetyl-alpha-D-glucosamine 1-phosphate: step 1/1. Its pathway is bacterial outer membrane biogenesis; LPS lipid A biosynthesis. In terms of biological role, catalyzes the last two sequential reactions in the de novo biosynthetic pathway for UDP-N-acetylglucosamine (UDP-GlcNAc). The C-terminal domain catalyzes the transfer of acetyl group from acetyl coenzyme A to glucosamine-1-phosphate (GlcN-1-P) to produce N-acetylglucosamine-1-phosphate (GlcNAc-1-P), which is converted into UDP-GlcNAc by the transfer of uridine 5-monophosphate (from uridine 5-triphosphate), a reaction catalyzed by the N-terminal domain. The protein is Bifunctional protein GlmU (glmU) of Desulfotalea psychrophila (strain LSv54 / DSM 12343).